The chain runs to 341 residues: Two-component response regulator EHD1 (341 aa).

One can recognise a Response regulatory domain in the interval 12–127 (RVLVIDDDCS…ELSNIWQHIF (116 aa)). Position 63 is a 4-aspartylphosphate (D63). The region spanning 195–254 (DLGKSRLTWTTQLHRQFIAAVNHLGEDKAVPKKILGIMKVKHLTREQVASHLQKYRMQLK) is the HTH myb-type domain. Residues 225–250 (PKKILGIMKVKHLTREQVASHLQKYR) constitute a DNA-binding region (H-T-H motif).

Two-component system major event consists of a His-to-Asp phosphorelay between a sensor histidine kinase (HK) and a response regulator (RR). In plants, the His-to-Asp phosphorelay involves an additional intermediate named Histidine-containing phosphotransfer protein (HPt). This multistep phosphorelay consists of a His-Asp-His-Asp sequential transfer of a phosphate group between first a His and an Asp of the HK protein, followed by the transfer to a conserved His of the HPt protein and finally the transfer to an Asp in the receiver domain of the RR protein.

The protein localises to the nucleus. Transcriptional activator that acts as a floral inducer to promote short-day (SD) flowering pathway. Activates Hd3a and other FT-like genes independently from Hd1. May also activate MADS-box transcription factors involved in flowering regulation. This Oryza sativa subsp. indica (Rice) protein is Two-component response regulator EHD1 (EHD1).